The primary structure comprises 255 residues: 6-phosphogluconolactonase 4 (255 aa).

It belongs to the glucosamine/galactosamine-6-phosphate isomerase family. 6-phosphogluconolactonase subfamily.

Its subcellular location is the cytoplasm. The catalysed reaction is 6-phospho-D-glucono-1,5-lactone + H2O = 6-phospho-D-gluconate + H(+). It participates in carbohydrate degradation; pentose phosphate pathway; D-ribulose 5-phosphate from D-glucose 6-phosphate (oxidative stage): step 2/3. In terms of biological role, involved in the pentose phosphate pathway via hydrolysis of 6-phosphogluconolactone to 6-phosphogluconate. In Saccharomyces cerevisiae (strain ATCC 204508 / S288c) (Baker's yeast), this protein is 6-phosphogluconolactonase 4.